Consider the following 363-residue polypeptide: NAD(P)H-quinone oxidoreductase subunit 1, chloroplastic (363 aa).

Helical transmembrane passes span 30 to 50 (FIPI…IVWL), 104 to 124 (IAVI…HLVL), 129 to 149 (IGVF…LMSG), 248 to 268 (YSGI…LVSS), 269 to 289 (LFVT…IFVF), 300 to 320 (VFEP…FLFI), and 336 to 356 (LLNL…LLTT).

The protein belongs to the complex I subunit 1 family. In terms of assembly, NDH is composed of at least 16 different subunits, 5 of which are encoded in the nucleus.

It localises to the plastid. It is found in the chloroplast thylakoid membrane. The catalysed reaction is a plastoquinone + NADH + (n+1) H(+)(in) = a plastoquinol + NAD(+) + n H(+)(out). The enzyme catalyses a plastoquinone + NADPH + (n+1) H(+)(in) = a plastoquinol + NADP(+) + n H(+)(out). NDH shuttles electrons from NAD(P)H:plastoquinone, via FMN and iron-sulfur (Fe-S) centers, to quinones in the photosynthetic chain and possibly in a chloroplast respiratory chain. The immediate electron acceptor for the enzyme in this species is believed to be plastoquinone. Couples the redox reaction to proton translocation, and thus conserves the redox energy in a proton gradient. This is NAD(P)H-quinone oxidoreductase subunit 1, chloroplastic from Morus indica (Mulberry).